Consider the following 373-residue polypeptide: SH3 domain-binding protein 5-like (373 aa).

Positions 1–53 (MEGKEGPSCEVRLPTPGAEREGPIHPELGAFGETASNTIKLSESSNDGKKEEI) are disordered. Polar residues predominate over residues 34-45 (TASNTIKLSESS). Coiled coils occupy residues 55–98 (EELD…ESAR) and 170–272 (WQEM…SEEI). 2 disordered regions span residues 276–305 (RTQS…TGPP) and 344–373 (TGAV…SVSL). Over residues 344-358 (TGAVECGGSRERGGD) the composition is skewed to basic and acidic residues.

This sequence belongs to the SH3BP5 family.

Functionally, functions as a guanine nucleotide exchange factor (GEF) for rab11a. The chain is SH3 domain-binding protein 5-like (sh3bp5l) from Xenopus tropicalis (Western clawed frog).